Consider the following 460-residue polypeptide: NADH-ubiquinone oxidoreductase chain 4 (460 aa).

A run of 13 helical transmembrane segments spans residues 20 to 42, 61 to 81, 94 to 113, 117 to 139, 148 to 168, 195 to 215, 225 to 245, 258 to 278, 285 to 304, 308 to 330, 351 to 371, 394 to 414, and 436 to 456; these read AKWL…LSWL, PLST…ILAS, RAYI…AFGA, IMFY…RWGN, TYFL…LLLM, LWWA…GVHL, PIAG…YGMM, LAYP…SICL, SLIA…GILI, WGFT…LFCL, MILP…LALP, LILT…LFLM, and LLII…ELMW.

This sequence belongs to the complex I subunit 4 family.

It is found in the mitochondrion membrane. It carries out the reaction a ubiquinone + NADH + 5 H(+)(in) = a ubiquinol + NAD(+) + 4 H(+)(out). In terms of biological role, core subunit of the mitochondrial membrane respiratory chain NADH dehydrogenase (Complex I) that is believed to belong to the minimal assembly required for catalysis. Complex I functions in the transfer of electrons from NADH to the respiratory chain. The immediate electron acceptor for the enzyme is believed to be ubiquinone. This is NADH-ubiquinone oxidoreductase chain 4 (MT-ND4) from Oncorhynchus mykiss (Rainbow trout).